Consider the following 514-residue polypeptide: MQQLNPSEISEIIKGRIDNLDVSSQARNEGTVVSVSDGIVRIHGLADVMYGEMIEFPGGVYGMALNLEQDSVGAVVLGAYDTLAEGMSAKCTGRILEVPVGKELLGRVVDALGNPIDGKGPLGNTETDAVEKVAPGVIWRKSVDQPVQTGYKSVDAMIPVGRGQRELIIGDRQIGKTAMAIDAIINQKDSGIFCVYVAVGQKRSTVANIVRKLEENGALANTIVVVASASESAALQFLAPYAGCTMGEFFRDRGEDALIVYDDLSKQAVAYRQISLLLRRPPGREAYPGDVFYLHSRLLERASRVSEEYVEKFTNGAVTGKTGSLTALPIIETQAGDVSAFVPTNVISITDGQIFLESAMFNSGIRPAVNAGVSVSRVGGAAQTKIIKKLSGGIRTALAQYRELAAFAQFASDLDEATRKQLEHGQRVTELMKQKQYAPMSIADMALSLYAAERGFLTDVEIAKIGSFEQALIAYFNRDHAELMAKINVKGDFNDEIDAGIKAGIEKFKATQTW.

170–177 (GDRQIGKT) contacts ATP.

The protein belongs to the ATPase alpha/beta chains family. In terms of assembly, F-type ATPases have 2 components, CF(1) - the catalytic core - and CF(0) - the membrane proton channel. CF(1) has five subunits: alpha(3), beta(3), gamma(1), delta(1), epsilon(1). CF(0) has three main subunits: a(1), b(2) and c(9-12). The alpha and beta chains form an alternating ring which encloses part of the gamma chain. CF(1) is attached to CF(0) by a central stalk formed by the gamma and epsilon chains, while a peripheral stalk is formed by the delta and b chains.

The protein resides in the cell inner membrane. The catalysed reaction is ATP + H2O + 4 H(+)(in) = ADP + phosphate + 5 H(+)(out). Produces ATP from ADP in the presence of a proton gradient across the membrane. The alpha chain is a regulatory subunit. The sequence is that of ATP synthase subunit alpha from Pseudomonas putida (strain W619).